The chain runs to 467 residues: ATP-dependent rRNA helicase rrp3 (467 aa).

The segment at 1-48 (MPGVKKRKVAREAPAPAPAQESDVESSTPEQTQEPEAQEQEQEEGQSK) is disordered. The short motif at 48–76 (KTFKELGIIEQLCEACETMGYKAPTPIQR) is the Q motif element. One can recognise a Helicase ATP-binding domain in the interval 79 to 250 (IPLALKGRDL…RASLSNPLRV (172 aa)). ATP is bound at residue 92–99 (AETGSGKT). Residues 198–201 (DEAD) carry the DEAD box motif. The Helicase C-terminal domain maps to 262–422 (TLLQSYLFIP…EYDCPKDEVM (161 aa)). Residues 439–467 (MKDYNEKKGSRGKKFGGKRSRDEMDQEEG) form a disordered region.

This sequence belongs to the DEAD box helicase family. DDX47/RRP3 subfamily. In terms of assembly, interacts with the SSU processome.

Its subcellular location is the nucleus. It carries out the reaction ATP + H2O = ADP + phosphate + H(+). Its function is as follows. ATP-dependent rRNA helicase required for pre-ribosomal RNA processing. Involved in the maturation of the 35S-pre-rRNA and to its cleavage to mature 18S rRNA. The chain is ATP-dependent rRNA helicase rrp3 from Aspergillus niger (strain ATCC MYA-4892 / CBS 513.88 / FGSC A1513).